The chain runs to 514 residues: tRNA-2-methylthio-N(6)-dimethylallyladenosine synthase (514 aa).

The MTTase N-terminal domain maps to 68 to 186; it reads RTFLIKTYGC…LPEILEEAYL (119 aa). Residues cysteine 77, cysteine 113, cysteine 147, cysteine 223, cysteine 227, and cysteine 230 each coordinate [4Fe-4S] cluster. Residues 209–439 enclose the Radical SAM core domain; that stretch reads RDGHIKAWVN…NKKVGIYSQQ (231 aa). In terms of domain architecture, TRAM spans 442 to 505; it reads SQYEGKIVTV…QYSLNGTFIQ (64 aa).

The protein belongs to the methylthiotransferase family. MiaB subfamily. As to quaternary structure, monomer. The cofactor is [4Fe-4S] cluster.

Its subcellular location is the cytoplasm. It carries out the reaction N(6)-dimethylallyladenosine(37) in tRNA + (sulfur carrier)-SH + AH2 + 2 S-adenosyl-L-methionine = 2-methylsulfanyl-N(6)-dimethylallyladenosine(37) in tRNA + (sulfur carrier)-H + 5'-deoxyadenosine + L-methionine + A + S-adenosyl-L-homocysteine + 2 H(+). Catalyzes the methylthiolation of N6-(dimethylallyl)adenosine (i(6)A), leading to the formation of 2-methylthio-N6-(dimethylallyl)adenosine (ms(2)i(6)A) at position 37 in tRNAs that read codons beginning with uridine. The protein is tRNA-2-methylthio-N(6)-dimethylallyladenosine synthase of Staphylococcus epidermidis (strain ATCC 35984 / DSM 28319 / BCRC 17069 / CCUG 31568 / BM 3577 / RP62A).